A 94-amino-acid polypeptide reads, in one-letter code: Large ribosomal subunit protein bL28 (94 aa).

This sequence belongs to the bacterial ribosomal protein bL28 family.

The polypeptide is Large ribosomal subunit protein bL28 (Hyphomonas neptunium (strain ATCC 15444)).